The chain runs to 176 residues: Pituitary adenylate cyclase-activating polypeptide (176 aa).

The first 24 residues, methionine 1–serine 24, serve as a signal peptide directing secretion. Positions serine 25–glycine 79 are excised as a propeptide. The tract at residues glutamate 39–proline 68 is disordered. The span at serine 56–proline 68 shows a compositional bias: low complexity. The important for receptor binding stretch occupies residues valine 150–leucine 158. Leucine 158 is subject to Leucine amide. Lysine 169 carries the lysine amide modification. A propeptide spanning residues isoleucine 173–leucine 176 is cleaved from the precursor.

It belongs to the glucagon family.

The protein resides in the secreted. Functionally, PACAP is a neuropeptide involved in diverse array of physiological processes through activating the PACAP subfamily of class B1 G protein-coupled receptors: VIP receptor 1 (VIPR1), VIP receptor 2 (VIPR2), and PACAP type I receptor (ADCYAP1R1). Exerts neuroprotective and general cytoprotective effects due to anti-apoptotic, anti-inflammatory, and antioxidant actions. Promotes neuron projection development through the RAPGEF2/Rap1/B-Raf/ERK pathway. In chromaffin cells, induces long-lasting increase of intracellular calcium concentrations and neuroendocrine secretion. Involved in the control of glucose homeostasis, induces insulin secretion by pancreatic beta cells. PACAP exists in two bioactive forms from proteolysis of the same precursor protein, PACAP27 and PACAP38, which differ by eleven amino acid residues in the C-terminus. This is Pituitary adenylate cyclase-activating polypeptide from Homo sapiens (Human).